Reading from the N-terminus, the 283-residue chain is Light-independent protochlorophyllide reductase iron-sulfur ATP-binding protein (283 aa).

ATP contacts are provided by residues 15–20 and Lys44; that span reads GIGKST. Ser19 serves as a coordination point for Mg(2+). Residues Cys100 and Cys134 each contribute to the [4Fe-4S] cluster site. An ATP-binding site is contributed by 185–186; sequence NR.

Belongs to the NifH/BchL/ChlL family. As to quaternary structure, homodimer. Protochlorophyllide reductase is composed of three subunits; ChlL, ChlN and ChlB. It depends on [4Fe-4S] cluster as a cofactor.

The enzyme catalyses chlorophyllide a + oxidized 2[4Fe-4S]-[ferredoxin] + 2 ADP + 2 phosphate = protochlorophyllide a + reduced 2[4Fe-4S]-[ferredoxin] + 2 ATP + 2 H2O. It functions in the pathway porphyrin-containing compound metabolism; chlorophyll biosynthesis (light-independent). Component of the dark-operative protochlorophyllide reductase (DPOR) that uses Mg-ATP and reduced ferredoxin to reduce ring D of protochlorophyllide (Pchlide) to form chlorophyllide a (Chlide). This reaction is light-independent. The L component serves as a unique electron donor to the NB-component of the complex, and binds Mg-ATP. This Synechococcus sp. (strain JA-2-3B'a(2-13)) (Cyanobacteria bacterium Yellowstone B-Prime) protein is Light-independent protochlorophyllide reductase iron-sulfur ATP-binding protein.